Consider the following 318-residue polypeptide: Methenyltetrahydromethanopterin cyclohydrolase (318 aa).

Belongs to the MCH family.

The protein resides in the cytoplasm. The enzyme catalyses 5,10-methenyl-5,6,7,8-tetrahydromethanopterin + H2O = N(5)-formyl-5,6,7,8-tetrahydromethanopterin + H(+). It functions in the pathway one-carbon metabolism; methanogenesis from CO(2); 5,10-methenyl-5,6,7,8-tetrahydromethanopterin from CO(2): step 3/3. Functionally, catalyzes the reversible interconversion of 5-formyl-H(4)MPT to methenyl-H(4)MPT(+). The sequence is that of Methenyltetrahydromethanopterin cyclohydrolase from Methanocella arvoryzae (strain DSM 22066 / NBRC 105507 / MRE50).